Reading from the N-terminus, the 1279-residue chain is MYKKLFTKKFISFVMSLLLVLTAAFSSMPFHNVYAADNASVVANIVGDFQDQLGDSNWNIDSNITIMQYVGNGLYEFTTPTQLKAGSYQYKVALNHSWNGGGVPSQGNLTLNLTNDSYVTFWFDYNTQSVTDSTKYTPISNDKLPRLVGTIQSAIGAGKDWDPGTSTAIMIDDNFDNVYSYTAHIPKGDYQYKVTLGNTWAENYGANGVQDGSNIQLSVANDADITFFYDANTHNIWTNYSPTLTGLDNNIYYDDLKHDTHDPFFRNPFGAIKVGQTVTLRIQAKNHDLESARISYWDDINKTRTELPMTRIGESPDGNYEYWEIKLSFDHPTRIWYYFILKDGTKTAYYGDNDDQLGGLGKATDTVNKDFELTVYDKNFDTNDWMKGAVMYQIFPDRFYNGDTSNDHAKTLSRGNDPIEFHNDWNDLPDNPNNAGTPGYTGDGIWSNDFFGGDLKGIDDKLDYLKGLGVSVIYLNPIFESPSNHKYDTADYTKIDEMFGTTQDFEKLMSDAHAKGINIILDGVFNHTSDDSIYFNRYGKYPDLGAYQDWKDGNQSLSPYGDWYTINSDGTYECWWGYDSLPVIKSLNGSEYNVTSWANFIINDKNAISKYWLNPDENLNDGADGWRLDVENEVAHDFWTHFRDAINTVKPEAPMIAENWGDASLDLLGDSFNSVMNYQFRNDIIDFLIGQSFDDGNGQHNPIDAAKLDQRLMSIYERYPLPAFYSTMNLLGSHDTMSILTVFGYNSADPNENSDAAKRLAEQKLKLATILQMGYPGMADIYYGDEAGVSGGKDPDDRRTFPWGNEDTALQDFFKNVSSIRNNNQVLKTGDLETLYAQNDVYAIGRRIINGKDAFGNSYPDSAAIVAINRSNSDQQITIDTTKFLRDGVAFKDLINGDKSYTINGGQITINIPAMSGVMLISDDGQDLTAPQVPSNVVATSGNGKVDLSWSQSDGATGYNIYRSSVEGGLYEKIASNVTGTTFEDTNVTNGLKYVYAISAVDELGNESEMSIDTVAYPAYPIGWVGNLTQVVDNHVISVSNPTEDIYAEVWADGLTNSTGQGPNMIAQLGYKYVGGTVNDSVYGSVYNSVYGVDDSDFTWVNAQYVGDIGNNDQYKASLHLINRSMGYLMRFSDNQGQSWTTTDTLSFYVVPSDDLIKPTAPILNQPGVESSRVSLTWSPSTDNVGIYNYEIYRSDGGTFNKIATVSNEVYNYVDTSVINGTTYSYKVVAADPSFNRTESNVVTIKPDVVPIKVTFNVTVPDYTPNSVNLAGTFPNATW.

The first 35 residues, 1–35 (MYKKLFTKKFISFVMSLLLVLTAAFSSMPFHNVYA), serve as a signal peptide directing secretion. Ca(2+) contacts are provided by Asp-248, Asn-250, Asp-288, Asp-343, Asn-401, Asp-403, Asn-406, Asp-407, Gly-452, and Asp-454. Positions 527 and 627 each coordinate substrate. The active-site Nucleophile is Asp-629. The active-site Proton donor is Glu-658. Substrate-binding positions include 734 to 735 (HD), Asp-794, and Arg-798. Fibronectin type-III domains lie at 930-1022 (APQV…AYPI) and 1158-1252 (KPTA…VVPI).

The protein belongs to the glycosyl hydrolase 13 family. It depends on Ca(2+) as a cofactor.

It carries out the reaction Endohydrolysis of (1-&gt;4)-alpha-D-glucosidic linkages in polysaccharides containing three or more (1-&gt;4)-alpha-linked D-glucose units.. The catalysed reaction is Hydrolysis of (1-&gt;6)-alpha-D-glucosidic linkages in pullulan, amylopectin and glycogen, and in the alpha- and beta-limit dextrins of amylopectin and glycogen.. This chain is Amylopullulanase (apu), found in Thermoanaerobacterium saccharolyticum.